We begin with the raw amino-acid sequence, 395 residues long: Glutamate N-acetyltransferase (395 aa).

6 residues coordinate substrate: T146, K169, T180, E263, N390, and T395. Catalysis depends on T180, which acts as the Nucleophile.

Belongs to the ArgJ family. In terms of assembly, heterotetramer of two alpha and two beta chains.

Its subcellular location is the cytoplasm. It catalyses the reaction N(2)-acetyl-L-ornithine + L-glutamate = N-acetyl-L-glutamate + L-ornithine. It functions in the pathway amino-acid biosynthesis; L-arginine biosynthesis; L-ornithine and N-acetyl-L-glutamate from L-glutamate and N(2)-acetyl-L-ornithine (cyclic): step 1/1. Its function is as follows. Catalyzes the transfer of the acetyl group from N(2)-acetylornithine to glutamate, forming N-acetylglutamate and L-ornithine. The sequence is that of Glutamate N-acetyltransferase from Methanosarcina acetivorans (strain ATCC 35395 / DSM 2834 / JCM 12185 / C2A).